We begin with the raw amino-acid sequence, 113 residues long: Large ribosomal subunit protein uL22 (113 aa).

The protein belongs to the universal ribosomal protein uL22 family. As to quaternary structure, part of the 50S ribosomal subunit.

This protein binds specifically to 23S rRNA; its binding is stimulated by other ribosomal proteins, e.g. L4, L17, and L20. It is important during the early stages of 50S assembly. It makes multiple contacts with different domains of the 23S rRNA in the assembled 50S subunit and ribosome. In terms of biological role, the globular domain of the protein is located near the polypeptide exit tunnel on the outside of the subunit, while an extended beta-hairpin is found that lines the wall of the exit tunnel in the center of the 70S ribosome. This chain is Large ribosomal subunit protein uL22, found in Anoxybacillus flavithermus (strain DSM 21510 / WK1).